The chain runs to 120 residues: Large ribosomal subunit protein uL18 (120 aa).

It belongs to the universal ribosomal protein uL18 family. Part of the 50S ribosomal subunit; part of the 5S rRNA/L5/L18/L25 subcomplex. Contacts the 5S and 23S rRNAs.

Its function is as follows. This is one of the proteins that bind and probably mediate the attachment of the 5S RNA into the large ribosomal subunit, where it forms part of the central protuberance. In Methylorubrum extorquens (strain CM4 / NCIMB 13688) (Methylobacterium extorquens), this protein is Large ribosomal subunit protein uL18.